A 724-amino-acid chain; its full sequence is MSEKLTGRVTVPTDVDMIQETKEIAERWGADALRDCDGTDMPDELKKMPAKIYSTYYTTRKDNAWANANPDEVQQVYLMTEFYTAMSQGELRIPLMKHLYKDQLKPNTIHDIKRWWEVVDRTTGEPLVLDAWEYDENNQEVIILNPDHFHDYTVSFLAFIIWDPVHMYNFITNDWQDVEHQITYDVRQPKTQKYVIEKLKRWMKENPDSDVVRFTTFFHQFTLVFNEFAKEKFVDWFGYSASVSPYILEQFEKEVGYKFRPEYIIDQGYHNNTNRVPSKEFRDFQEFQQREVAKLMKVLVDICHDNDKEAMMFLGDHWIGTEPFGEYFKHVGLDAVVGSVGNGTTLRLISDIPGVKYTEGRFLPYFFPDVFHEGGDPIKEAKVNWVTARRAILRKPVDRIGYGGYLKLALDFPEFIQYIEEVCDEFRLLYDNMGGQSPYSHFKVGVLNSWGKIRSWGTHMVAHAIDYKQTYSYAGVLEALSGMPFDVEFISFEDVIKNPVILNECGVVINVGDAYTGPSGGAYWTNEKVSSAVKAFVAQGGGFIGVGEPSACEHQGRYFTLANVLGVNKEIGFSMSTDKYNWDEHSHFITEDSNESINFGEGMKNIYALDGAQILRKDGQDVQMAVNQFGDGRSVYISGIPYSFENSRMLYRAIFWAAGMEQEMKKWYSSNYNVEVNYYPATKKYCIVNNTYEPQETMIYDGLGREYSMKLKANDILWFTFLED.

The active-site Proton donor is the Asp-316.

It belongs to the glycoside hydrolase 112 family.

The catalysed reaction is beta-D-galactosyl-(1-&gt;3)-N-acetyl-D-glucosamine + phosphate = alpha-D-galactose 1-phosphate + N-acetyl-D-glucosamine. In terms of biological role, reversibly phosphorolyzes beta-D-galactopyranosyl-(1-&gt;3)-N-acetyl-D-glucosamine to form alpha-D-galactopyranose 1-phosphate and acetyl-D-glucosamine. Active towards galacto-N-biose and lacto-N-biose. Does not phosphorolyze galacto-N-tetraose or lacto-N-tetraose. In the reverse reaction has activity toward N-acetyl-D-glucosamine and N-acetyl-D-galactosamine, but not L-rhamnose, D-glucose or D-galactose. The polypeptide is 1,3-beta-galactosyl-N-acetylhexosamine phosphorylase Cphy3030 (Lachnoclostridium phytofermentans (strain ATCC 700394 / DSM 18823 / ISDg) (Clostridium phytofermentans)).